Consider the following 61-residue polypeptide: Temporin-SN2 (61 aa).

Positions 1-22 (MFTLKKTLLLLFFLGTINLSLC) are cleaved as a signal peptide. A propeptide spans 23–44 (EEERNAEEERRDGDDEMDVEVK) (removed in mature form). K61 carries the post-translational modification Lysine amide.

This sequence belongs to the frog skin active peptide (FSAP) family. Temporin subfamily. Expressed by the skin glands.

Its subcellular location is the secreted. Its function is as follows. Antimicrobial peptide. Active against some Gram-positive and Gram-negative bacterial strains. Active against fungus C.glabrata 090902 but not against C.albicans ATCC 12231. Shows very weak hemolytic activity against human erythrocytes. The chain is Temporin-SN2 from Sylvirana spinulosa (Fine-spined frog).